A 596-amino-acid chain; its full sequence is Phosphoenolpyruvate carboxykinase [GTP] (596 aa).

Substrate-binding positions include arginine 77 and 205 to 207 (YGG). Residues lysine 214 and histidine 234 each coordinate Mn(2+). A substrate-binding site is contributed by serine 256. 257-262 (ACGKTN) contributes to the GTP binding site. Cysteine 258 is a catalytic residue. Mn(2+) is bound at residue aspartate 283. The disordered stretch occupies residues 362–388 (KKGSTEKAAHPNSRFTAPAKNNPAISP). 373-375 (NSR) serves as a coordination point for substrate. GTP is bound by residues arginine 375, arginine 406, and 499 to 502 (YGDN).

The protein belongs to the phosphoenolpyruvate carboxykinase [GTP] family. In terms of assembly, monomer. It depends on Mn(2+) as a cofactor.

It is found in the cytoplasm. The catalysed reaction is oxaloacetate + GTP = phosphoenolpyruvate + GDP + CO2. The protein operates within carbohydrate biosynthesis; gluconeogenesis. In terms of biological role, catalyzes the conversion of oxaloacetate (OAA) to phosphoenolpyruvate (PEP), the rate-limiting step in the metabolic pathway that produces glucose from lactate and other precursors derived from the citric acid cycle. This is Phosphoenolpyruvate carboxykinase [GTP] from Anaeromyxobacter dehalogenans (strain 2CP-1 / ATCC BAA-258).